Consider the following 102-residue polypeptide: Salivary protein Salp9 (102 aa).

The signal sequence occupies residues 1–21 (MGLTEIMLVLVSLAFVATAAA). Residues Asn26 and Asn87 are each glycosylated (N-linked (GlcNAc...) asparagine). A disordered region spans residues 83–102 (SGVPNDTDAKIEETEEELEA).

This sequence belongs to the salp14 family. In terms of tissue distribution, salivary gland (at protein level). Saliva (at protein level). Midgut.

The protein resides in the secreted. Its function is as follows. Salivary protein that facilitates blood feeding of adult ticks on vertebrate species. Inhibits the lectin pathway of complement system activation in the host. This Ixodes scapularis (Black-legged tick) protein is Salivary protein Salp9.